The primary structure comprises 461 residues: Bifunctional protein HldE (461 aa).

Residues 1–312 are ribokinase; sequence MLEFLSQQKP…IRSFKSMSFE (312 aa). 191–194 contacts ATP; the sequence is NKKE. Aspartate 259 is an active-site residue. The interval 334-461 is cytidylyltransferase; the sequence is FTNGCFDIVH…KIIEKIKDKK (128 aa).

This sequence in the N-terminal section; belongs to the carbohydrate kinase PfkB family. The protein in the C-terminal section; belongs to the cytidylyltransferase family. As to quaternary structure, homodimer.

It carries out the reaction D-glycero-beta-D-manno-heptose 7-phosphate + ATP = D-glycero-beta-D-manno-heptose 1,7-bisphosphate + ADP + H(+). The catalysed reaction is D-glycero-beta-D-manno-heptose 1-phosphate + ATP + H(+) = ADP-D-glycero-beta-D-manno-heptose + diphosphate. It participates in nucleotide-sugar biosynthesis; ADP-L-glycero-beta-D-manno-heptose biosynthesis; ADP-L-glycero-beta-D-manno-heptose from D-glycero-beta-D-manno-heptose 7-phosphate: step 1/4. It functions in the pathway nucleotide-sugar biosynthesis; ADP-L-glycero-beta-D-manno-heptose biosynthesis; ADP-L-glycero-beta-D-manno-heptose from D-glycero-beta-D-manno-heptose 7-phosphate: step 3/4. Functionally, catalyzes the phosphorylation of D-glycero-D-manno-heptose 7-phosphate at the C-1 position to selectively form D-glycero-beta-D-manno-heptose-1,7-bisphosphate. In terms of biological role, catalyzes the ADP transfer from ATP to D-glycero-beta-D-manno-heptose 1-phosphate, yielding ADP-D-glycero-beta-D-manno-heptose. The polypeptide is Bifunctional protein HldE (Campylobacter jejuni (strain RM1221)).